The chain runs to 198 residues: Imidazoleglycerol-phosphate dehydratase (198 aa).

It belongs to the imidazoleglycerol-phosphate dehydratase family.

The protein localises to the cytoplasm. The catalysed reaction is D-erythro-1-(imidazol-4-yl)glycerol 3-phosphate = 3-(imidazol-4-yl)-2-oxopropyl phosphate + H2O. Its pathway is amino-acid biosynthesis; L-histidine biosynthesis; L-histidine from 5-phospho-alpha-D-ribose 1-diphosphate: step 6/9. In Gluconobacter oxydans (strain 621H) (Gluconobacter suboxydans), this protein is Imidazoleglycerol-phosphate dehydratase.